Reading from the N-terminus, the 191-residue chain is Adenylate kinase (191 aa).

9–17 (GVPGVGATT) provides a ligand contact to ATP.

It belongs to the archaeal adenylate kinase family.

The protein localises to the cytoplasm. It catalyses the reaction AMP + ATP = 2 ADP. This chain is Adenylate kinase, found in Methanopyrus kandleri (strain AV19 / DSM 6324 / JCM 9639 / NBRC 100938).